The following is a 1115-amino-acid chain: MLPLEHKASGRVQATGRGVRASVELSSVLPQQRAAQLQHQKCNTGARLGRDPRRGVDAERTLVCTAATTASVPSTSGASPSGSQLSSKALRPRRFSAPVIARLLRSTTTVQELADLVQQQSLYMDSSHVGIAMLHLALLVSRAEQQAAAQLQLQLAAKQAATRRAGSGASTSGRARGWGSGPGRNGSGSSSVSVNGSGSSSNGSSSSSSSLAMGMQLSMASIGDDVVSGVNAGPVPSGGADALLDLEMSSILDDDDGAGARQLQQMSDDLAAGLEAAATTTAAPEAGVAAAGGTGAGAAADAAASSSAPSLVAAAAAAAAAAASPASSPDVARTLRTLLSRAFSLGLDSLSGPQLAAVFTGLAVLRRPRQQQQQQQQAGAAGAGANAGAGGVGGVGVSAGDRLVAEQLLAAMGPKLYECRPQDLANTLASVALLGLPPDADLRTSFYAAVRQQQRRFGPRELATTLWAYGAMGTYVQEDAVQLVLELSRARLTSFSPLQLAKAVQGLAALRYRPSPEWVEAYCSVLRPALRRMSSRELCAVLLALASLQVGLDGGTRAALLVHTFSGPLPGMAPGEVALSLWALGRLSAVDMDLPALIDLDMSGRVLDLTSRLLAAGGFSGGELQQLLEGLTRLALQPPLEWMQAFVAALQPQLDKLDAQQLAGVLNSLAAQQYRPQPQMQEVVLAATQANMKQLLADTTCSAALLTALRRLNIEPPPGWVGALLEESRSALKNRCTDLHLANLAGSLAAWGVRPDGRWAARLMWRSQVLMNEDRMSPRALVALLQAMVSLGLSPNPVWTQLCLQAAVRRASQPAFEPHHYGTLMASLHALGIQPPQEWLTRMLLSTYRCWDRFSVTHWSSLLPALVLLKARPPREWLRRFEATSAARLADCSALQLLTLAVSLAQLHQLHAAGAVADTPLLLPGAAAAAAAAAPAGASSAAAAGDSPAALSAVPAAAGDGALVPSFMSIDDDGTAAVAAAATALAAAEPAAHAATSTTTATAVAHPQPQLLPQAQALPQPGPEWQAAWWAASTRLLLRVRYAPSELVLTAGWLGSLGLRPPPEWLQACAEVAARYSKVMDAAERQQLAAAVAPLALEAVAPPSAPPAGAASTAH.

Low complexity-rich tracts occupy residues 69 to 87 (TASV…QLSS) and 163 to 175 (RRAG…SGRA). Disordered stretches follow at residues 69–90 (TASV…SKAL) and 163–210 (RRAG…SSSS). Residues 176 to 186 (RGWGSGPGRNG) are compositionally biased toward gly residues. The span at 187–210 (SGSSSVSVNGSGSSSNGSSSSSSS) shows a compositional bias: low complexity. 9 tandem repeats follow at residues 483-521 (LVLE…WVEA), 607-645 (LDLT…WMQA), 685-723 (LAAT…WVGA), 724-763 (LLEE…AARL), 764-803 (MWRS…TQLC), 804-842 (LQAA…WLTR), 843-880 (MLLS…WLRR), 990-1029 (PAAH…QAAW), and 1030-1068 (WAAS…WLQA). The interval 483–1068 (LVLELSRARL…LRPPPEWLQA (586 aa)) is 9 X 38 AA approximate repeats.

In terms of assembly, part of a 400 kDa complex which is not stably associated with RNA.

The protein localises to the plastid. The protein resides in the chloroplast stroma. In terms of biological role, required for expression of the chloroplast encoded psbC mRNA, most likely for translation initiation. Interacts with the 5'-UTR of psbC. This is Tbc2 translation factor, chloroplastic (TBC2) from Chlamydomonas reinhardtii (Chlamydomonas smithii).